Consider the following 430-residue polypeptide: Histidine--tRNA ligase (430 aa).

This sequence belongs to the class-II aminoacyl-tRNA synthetase family. In terms of assembly, homodimer.

It localises to the cytoplasm. The catalysed reaction is tRNA(His) + L-histidine + ATP = L-histidyl-tRNA(His) + AMP + diphosphate + H(+). This Chlorobaculum parvum (strain DSM 263 / NCIMB 8327) (Chlorobium vibrioforme subsp. thiosulfatophilum) protein is Histidine--tRNA ligase.